The chain runs to 106 residues: MSTAIAQQKIRIRLKAFDRRMLDLSCDKIIETADTTAATAIGPIPLPTKRKIYCVLRSPHVDKDSREHFETRTHRRIIDIYSPSAKTIDALMKLDLPSGVDIEVKL.

The protein belongs to the universal ribosomal protein uS10 family. Part of the 30S ribosomal subunit.

In terms of biological role, involved in the binding of tRNA to the ribosomes. This is Small ribosomal subunit protein uS10 from Synechococcus sp. (strain WH7803).